Consider the following 95-residue polypeptide: Aspartyl/glutamyl-tRNA(Asn/Gln) amidotransferase subunit C (95 aa).

This sequence belongs to the GatC family. As to quaternary structure, heterotrimer of A, B and C subunits.

The enzyme catalyses L-glutamyl-tRNA(Gln) + L-glutamine + ATP + H2O = L-glutaminyl-tRNA(Gln) + L-glutamate + ADP + phosphate + H(+). The catalysed reaction is L-aspartyl-tRNA(Asn) + L-glutamine + ATP + H2O = L-asparaginyl-tRNA(Asn) + L-glutamate + ADP + phosphate + 2 H(+). Its function is as follows. Allows the formation of correctly charged Asn-tRNA(Asn) or Gln-tRNA(Gln) through the transamidation of misacylated Asp-tRNA(Asn) or Glu-tRNA(Gln) in organisms which lack either or both of asparaginyl-tRNA or glutaminyl-tRNA synthetases. The reaction takes place in the presence of glutamine and ATP through an activated phospho-Asp-tRNA(Asn) or phospho-Glu-tRNA(Gln). The polypeptide is Aspartyl/glutamyl-tRNA(Asn/Gln) amidotransferase subunit C (Bartonella henselae (strain ATCC 49882 / DSM 28221 / CCUG 30454 / Houston 1) (Rochalimaea henselae)).